Here is a 414-residue protein sequence, read N- to C-terminus: Chromobox protein homolog 6 (414 aa).

A Chromo domain is found at 11-69 (FAAESIIKRRIRKGRIEYLVKWKGWAIKYSTWEPEENILDSRLIAAFEQKERERELYGP). Serine 107 is subject to Phosphoserine. Disordered regions lie at residues 127 to 152 (HRMS…PISP), 267 to 308 (APFD…VPNW), and 344 to 365 (ALEP…PEMS). The segment covering 267 to 287 (APFDAHSSSSSGCPSPTLQSS) has biased composition (low complexity).

As to quaternary structure, component of a PRC1-like complex. Distinct PRC1-like core complexes are composed of a RING1 subunit (RING1B or RING1A), one of the six PCGF proteins (PCGF1-6), one PHC protein (PHC1-3) and one of the CBX proteins (CBX2, CBX4, CBX6, CBX7 or CBX8). Interacts with PCGF1, PCGF2, PCGF3, BMI1, PCGF5, PCGF6, RING1 and RNF2. May interact with H3C15 and H3C1. Interacts (via chromodomain) with single-stranded RNA (ssRNA). In terms of processing, ubiquitinated. Ubiquitination regulates the function of the Polycomb group (PcG) multiprotein PRC1-like complex. Deubiquitinated by USP26. Expressed in mouse embryonic stem cells.

The protein resides in the nucleus. Its subcellular location is the chromosome. Functionally, component of a Polycomb group (PcG) multiprotein PRC1-like complex, a complex class required to maintain the transcriptionally repressive state of many genes, including Hox genes, throughout development. PcG PRC1 complex acts via chromatin remodeling and modification of histones; it mediates monoubiquitination of histone H2A 'Lys-119', rendering chromatin heritably changed in its expressibility. Possibly contributes to the target selectivity of the PRC1 complex by binding specific regions of chromatin. Recruitment to chromatin might occur in an H3K27me3-independent fashion. May have a PRC1-independent function in embryonic stem cells. This chain is Chromobox protein homolog 6 (Cbx6), found in Mus musculus (Mouse).